Reading from the N-terminus, the 431-residue chain is Putative serine/threonine-protein kinase B (431 aa).

The Protein kinase domain occupies 20-279 (YLNKGIVGLG…VRENFQIPYI (260 aa)). ATP-binding positions include 26–34 (VGLGSYGEG) and Lys49. Asp147 acts as the Proton acceptor in catalysis. One can recognise a PH domain in the interval 331 to 429 (DVTHRGHVNK…WVHAIQRGIG (99 aa)).

This sequence belongs to the protein kinase superfamily. Ser/Thr protein kinase family.

It carries out the reaction L-seryl-[protein] + ATP = O-phospho-L-seryl-[protein] + ADP + H(+). The enzyme catalyses L-threonyl-[protein] + ATP = O-phospho-L-threonyl-[protein] + ADP + H(+). In Trypanosoma brucei brucei, this protein is Putative serine/threonine-protein kinase B (NRKB).